The primary structure comprises 381 residues: Carboxylesterase 5A (381 aa).

Ser-108 serves as the catalytic Acyl-ester intermediate. Cys-162 and Cys-173 are disulfide-bonded. The N-linked (GlcNAc...) asparagine glycan is linked to Asn-163. Glu-227 acts as the Charge relay system in catalysis. An N-linked (GlcNAc...) asparagine glycan is attached at Asn-245. His-336 functions as the Charge relay system in the catalytic mechanism.

It belongs to the type-B carboxylesterase/lipase family. As to quaternary structure, component of a epididymal complex at least composed of soluble form of prion protein PRNP, CLU, BPI, CES5A, MANBA and GLB1. Post-translationally, N-glycosylated. As to expression, detected in corpus and cauda epididymal fluid. Present in seminal fluid but not found to be associated with sperm (at protein level). Not expressed in other tissues.

The protein resides in the secreted. The catalysed reaction is a carboxylic ester + H2O = an alcohol + a carboxylate + H(+). In terms of biological role, involved in the detoxification of xenobiotics and in the activation of ester and amide prodrugs. This chain is Carboxylesterase 5A (CES5A), found in Ovis aries (Sheep).